Here is a 1940-residue protein sequence, read N- to C-terminus: Myosin-3 (1940 aa).

Positions 33–82 constitute a Myosin N-terminal SH3-like domain; it reads DAKTYCFVVDSKEEYAKGKIKSSQDGKVTVETEDNRTLVVKPEDVYAMNP. Positions 86-779 constitute a Myosin motor domain; the sequence is DRIEDMAMLT…LLGTLEEMRD (694 aa). Position 130 is an N6,N6,N6-trimethyllysine (Lys130). 179–186 is a binding site for ATP; it reads GESGAGKT. Actin-binding stretches follow at residues 656–678 and 758–772; these read LNKL…IPNE and KFGH…GLLG. The IQ domain occupies 782-811; that stretch reads LAKLITRTQAVCRGFLMRVEFQKMVQRRES. Residues 840-1933 are a coiled coil; that stretch reads LLKSAETEKE…KTRDFTSSRM (1094 aa).

It belongs to the TRAFAC class myosin-kinesin ATPase superfamily. Myosin family. Muscle myosin is a hexameric protein that consists of 2 heavy chain subunits (MHC), 2 alkali light chain subunits (MLC) and 2 regulatory light chain subunits (MLC-2). As to expression, expressed in fetal bone, thymus, placenta, heart, brain, and liver.

It localises to the cytoplasm. Its subcellular location is the myofibril. In terms of biological role, muscle contraction. The protein is Myosin-3 (MYH3) of Homo sapiens (Human).